Here is a 31-residue protein sequence, read N- to C-terminus: Histone H1.3 (31 aa).

This sequence belongs to the histone H1/H5 family.

The protein localises to the nucleus. It is found in the chromosome. In terms of biological role, histones H1 are necessary for the condensation of nucleosome chains into higher-order structures. In Triticum aestivum (Wheat), this protein is Histone H1.3.